The sequence spans 143 residues: Peptide methionine sulfoxide reductase MsrB (143 aa).

Positions 16–139 constitute a MsrB domain; the sequence is DAELRRRLTP…NSAALNFEAK (124 aa). Positions 55, 58, 104, and 107 each coordinate Zn(2+). The active-site Nucleophile is Cys-128.

It belongs to the MsrB Met sulfoxide reductase family. The cofactor is Zn(2+).

The catalysed reaction is L-methionyl-[protein] + [thioredoxin]-disulfide + H2O = L-methionyl-(R)-S-oxide-[protein] + [thioredoxin]-dithiol. This chain is Peptide methionine sulfoxide reductase MsrB, found in Burkholderia thailandensis (strain ATCC 700388 / DSM 13276 / CCUG 48851 / CIP 106301 / E264).